The following is a 537-amino-acid chain: CTP synthase (537 aa).

The amidoligase domain stretch occupies residues 1-268; sequence MSTKYIFVTG…DQIVCDHLKL (268 aa). Ser14 is a CTP binding site. Ser14 contacts UTP. 15 to 20 contacts ATP; it reads SIGKGI. Residue Tyr55 coordinates L-glutamine. Residue Asp72 participates in ATP binding. Positions 72 and 142 each coordinate Mg(2+). CTP is bound by residues 149–151, 189–194, and Lys225; these read DIE and KTKPTQ. Residues 189–194 and Lys225 contribute to the UTP site; that span reads KTKPTQ. Residues 293–536 enclose the Glutamine amidotransferase type-1 domain; it reads RIALVGKYVE…VTAAVEKSSD (244 aa). L-glutamine is bound at residue Gly355. The Nucleophile; for glutamine hydrolysis role is filled by Cys382. L-glutamine is bound by residues 383-386, Glu406, and Arg464; that span reads LGMQ. Residues His509 and Glu511 contribute to the active site.

The protein belongs to the CTP synthase family. Homotetramer.

It carries out the reaction UTP + L-glutamine + ATP + H2O = CTP + L-glutamate + ADP + phosphate + 2 H(+). It catalyses the reaction L-glutamine + H2O = L-glutamate + NH4(+). The enzyme catalyses UTP + NH4(+) + ATP = CTP + ADP + phosphate + 2 H(+). It participates in pyrimidine metabolism; CTP biosynthesis via de novo pathway; CTP from UDP: step 2/2. With respect to regulation, allosterically activated by GTP, when glutamine is the substrate; GTP has no effect on the reaction when ammonia is the substrate. The allosteric effector GTP functions by stabilizing the protein conformation that binds the tetrahedral intermediate(s) formed during glutamine hydrolysis. Inhibited by the product CTP, via allosteric rather than competitive inhibition. Catalyzes the ATP-dependent amination of UTP to CTP with either L-glutamine or ammonia as the source of nitrogen. Regulates intracellular CTP levels through interactions with the four ribonucleotide triphosphates. The protein is CTP synthase of Streptococcus sanguinis (strain SK36).